The following is a 651-amino-acid chain: Polyadenylate-binding protein 1 (651 aa).

Positions 1-27 (MSSTESPVPAAAAPAEAVPASTPAPAA) are enriched in low complexity. Residues 1–42 (MSSTESPVPAAAAPAEAVPASTPAPAAEQPAVGNGEQRNNAD) are disordered. 4 consecutive RRM domains span residues 47-125 (TSLY…WSQR), 135-211 (GNIF…HHIP), 227-304 (TNVY…RAQK), and 330-407 (VNLY…LAQR). 2 disordered regions span residues 481–554 (QPGQ…EADQ) and 632–651 (QNDS…KTEA). Pro residues predominate over residues 529 to 540 (AGQPVPGQPMPR). In terms of domain architecture, PABC spans 555–632 (PGALTAAALA…ALEVLKEYQQ (78 aa)). Residues 636–651 (AGAEAEANAEAPKTEA) are compositionally biased toward low complexity.

This sequence belongs to the polyadenylate-binding protein type-1 family. As to quaternary structure, part of large ribonucleoprotein complexes (mRNPs) containing RNA-binding proteins RRM4 and PAB1, endosome-binding protein UPA1, core scaffold protein UPA2 and associated factor GRP1. Interacts (via PABC domain) with UPA1 (via PAM2 domain). Interacts (via PABC domain) with UPA2 (via PAM2 domains).

It is found in the cytoplasm. It localises to the cytoskeleton. The protein resides in the endosome. In terms of biological role, RNA-binding protein involved in the formation of polar-growing hyphae which is essential for infection by the plant pathogen. Component of endosomal mRNA transport that regulates polarity of the infectious hyphae by transporting a broad spectrum of cargo mRNAs from the nucleus to cell poles. The chain is Polyadenylate-binding protein 1 from Mycosarcoma maydis (Corn smut fungus).